A 426-amino-acid chain; its full sequence is 3-phosphoshikimate 1-carboxyvinyltransferase (426 aa).

Positions 21, 22, and 26 each coordinate 3-phosphoshikimate. K21 provides a ligand contact to phosphoenolpyruvate. 2 residues coordinate phosphoenolpyruvate: G92 and R122. Positions 167, 168, 169, 195, 315, and 342 each coordinate 3-phosphoshikimate. Q169 contacts phosphoenolpyruvate. Catalysis depends on D315, which acts as the Proton acceptor. R346 and R386 together coordinate phosphoenolpyruvate.

It belongs to the EPSP synthase family. In terms of assembly, monomer.

The protein resides in the cytoplasm. It carries out the reaction 3-phosphoshikimate + phosphoenolpyruvate = 5-O-(1-carboxyvinyl)-3-phosphoshikimate + phosphate. It participates in metabolic intermediate biosynthesis; chorismate biosynthesis. Catalyzes the transfer of the enolpyruvyl moiety of phosphoenolpyruvate (PEP) to the 5-hydroxyl of shikimate-3-phosphate (S3P) to produce enolpyruvyl shikimate-3-phosphate and inorganic phosphate. This is 3-phosphoshikimate 1-carboxyvinyltransferase from Methanosphaera stadtmanae (strain ATCC 43021 / DSM 3091 / JCM 11832 / MCB-3).